The chain runs to 1105 residues: Mediator of RNA polymerase II transcription subunit 14 (1105 aa).

The disordered stretch occupies residues 28–48 (ASQQANGGIYRNGIGKKSHSP).

Belongs to the Mediator complex subunit 14 family. As to quaternary structure, component of the Mediator complex.

It localises to the nucleus. Functionally, component of the Mediator complex, a coactivator involved in the regulated transcription of nearly all RNA polymerase II-dependent genes. Mediator functions as a bridge to convey information from gene-specific regulatory proteins to the basal RNA polymerase II transcription machinery. Mediator is recruited to promoters by direct interactions with regulatory proteins and serves as a scaffold for the assembly of a functional preinitiation complex with RNA polymerase II and the general transcription factors. This chain is Mediator of RNA polymerase II transcription subunit 14 (RGR1), found in Coccidioides immitis (strain RS) (Valley fever fungus).